A 119-amino-acid polypeptide reads, in one-letter code: Large ribosomal subunit protein uL22 (119 aa).

Belongs to the universal ribosomal protein uL22 family. As to quaternary structure, part of the 50S ribosomal subunit.

Functionally, this protein binds specifically to 23S rRNA; its binding is stimulated by other ribosomal proteins, e.g. L4, L17, and L20. It is important during the early stages of 50S assembly. It makes multiple contacts with different domains of the 23S rRNA in the assembled 50S subunit and ribosome. The globular domain of the protein is located near the polypeptide exit tunnel on the outside of the subunit, while an extended beta-hairpin is found that lines the wall of the exit tunnel in the center of the 70S ribosome. The protein is Large ribosomal subunit protein uL22 of Bifidobacterium animalis subsp. lactis (strain AD011).